A 203-amino-acid chain; its full sequence is MKLRWLMWLVVFLAGCSSTPDYKNPPWNPEVPVKRAMQWMPITEKAGNAWGVSPRLVTAIIAVESGGNPTLVSKSNAVGLMQIKASTAGREVYRYMGWSGQPSSSELKNPERNISIGTAYLSILEHGVLKGIEAPETMQYALVVSYVNGAGALLRTFSSDRKAAIEKINDLSPDEFVEHVAKNHPAPQAPRYIWKVQQAMNAM.

Residues 1–15 (MKLRWLMWLVVFLAG) form the signal peptide. Cysteine 16 carries N-palmitoyl cysteine lipidation. A lipid anchor (S-diacylglycerol cysteine) is attached at cysteine 16.

It belongs to the transglycosylase Slt family.

The protein localises to the cell outer membrane. The catalysed reaction is Endolytic cleavage of the (1-&gt;4)-beta-glycosidic linkage between N-acetylmuramic acid (MurNAc) and N-acetylglucosamine (GlcNAc) residues in peptidoglycan with concomitant formation of a 1,6-anhydrobond in the MurNAc residue.. Functionally, murein-degrading enzyme. May play a role in recycling of muropeptides during cell elongation and/or cell division. Preferentially cleaves at a distance of more than two disaccharide units from the ends of the glycan chain. This Cronobacter sakazakii (strain ATCC BAA-894) (Enterobacter sakazakii) protein is Endo-type membrane-bound lytic murein transglycosylase A.